Here is a 197-residue protein sequence, read N- to C-terminus: Zinc finger protein 581 (197 aa).

The segment covering 1–10 has biased composition (pro residues); that stretch reads MLVLPSPCPQ. The tract at residues 1–52 is disordered; sequence MLVLPSPCPQPLAFSSVETMEGPPRRTCRSPEPGPSSSIGSPQASSPPRPNH. A compositionally biased stretch (low complexity) spans 35–44; the sequence is PSSSIGSPQA. 4 consecutive C2H2-type zinc fingers follow at residues 87-109, 115-137, 145-167, and 173-196; these read YSCPVCSRVFEYMSYLQRHSITH, FECDICGKAFKRASHLARHHSIH, HGCPLCPRRFRDAGELAQHSRVH, and FQCPHCPRRFMEQNTLQKHTRWKH.

Its subcellular location is the nucleus. Functionally, may be involved in transcriptional regulation. The protein is Zinc finger protein 581 (ZNF581) of Homo sapiens (Human).